We begin with the raw amino-acid sequence, 438 residues long: Putative formin-like protein 21a (438 aa).

A disordered region spans residues 1–74 (MSPVEISGAD…RVLPRPPPPP (74 aa)). Over residues 22–61 (PLPPPPPPPPPPMRRRAPLPPPPPPPMRRRAPLPPPPPPA) the composition is skewed to pro residues. Positions 124–438 (FPCPSKKKSS…SYGYFDQPWI (315 aa)) constitute an FH2 domain.

This sequence belongs to the formin-like family. Class-II subfamily.

The protein is Putative formin-like protein 21a (FH21A) of Arabidopsis thaliana (Mouse-ear cress).